A 336-amino-acid chain; its full sequence is Lipoyl synthase (336 aa).

Cysteine 81, cysteine 86, cysteine 92, cysteine 107, cysteine 111, cysteine 114, and serine 323 together coordinate [4Fe-4S] cluster. Residues 93 to 312 (FGHGTATFMI…EDYGYELGFS (220 aa)) form the Radical SAM core domain.

It belongs to the radical SAM superfamily. Lipoyl synthase family. [4Fe-4S] cluster serves as cofactor.

It is found in the cytoplasm. The enzyme catalyses [[Fe-S] cluster scaffold protein carrying a second [4Fe-4S](2+) cluster] + N(6)-octanoyl-L-lysyl-[protein] + 2 oxidized [2Fe-2S]-[ferredoxin] + 2 S-adenosyl-L-methionine + 4 H(+) = [[Fe-S] cluster scaffold protein] + N(6)-[(R)-dihydrolipoyl]-L-lysyl-[protein] + 4 Fe(3+) + 2 hydrogen sulfide + 2 5'-deoxyadenosine + 2 L-methionine + 2 reduced [2Fe-2S]-[ferredoxin]. It functions in the pathway protein modification; protein lipoylation via endogenous pathway; protein N(6)-(lipoyl)lysine from octanoyl-[acyl-carrier-protein]: step 2/2. Its function is as follows. Catalyzes the radical-mediated insertion of two sulfur atoms into the C-6 and C-8 positions of the octanoyl moiety bound to the lipoyl domains of lipoate-dependent enzymes, thereby converting the octanoylated domains into lipoylated derivatives. The chain is Lipoyl synthase from Stenotrophomonas maltophilia (strain K279a).